The primary structure comprises 357 residues: MPKKVFQQEDVEQKITENFEPKQEFEQDELDIEMDCSQFETTMDRQNTDIPFQHMVRPKVTMWQKLLMATICLFSCGILAQSVQWLVDSWRDNQWIAFVFAMVSLFLVLLGLGTIIKEWRRLVQLKKRLILQEKSREIRSKSAVNLTEVSSEGKELCLKIASLMGIDDKSPQLIAWQEQVHEAYTEQEILRLFSQNVLIPFDRVAKKLISKNAVESALIVAVSPLAIVDMFFIAWRNIRLINQLAKLYGIELGYVSRLRLLRMVFVNMAFAGAAEVIQDLGLEWLSQDITAKLSARVAQGIGVGILTARLGIKAMEFCRPIAVAPEEKLRLSHIQTELLGTLKTTLFSANKVKEKVR.

Helical transmembrane passes span 67–87 (LMAT…QWLV), 96–116 (IAFV…GTII), and 213–233 (AVES…MFFI).

Belongs to the UPF0283 family.

It is found in the cell inner membrane. This is UPF0283 membrane protein HSM_0945 from Histophilus somni (strain 2336) (Haemophilus somnus).